A 75-amino-acid chain; its full sequence is Small ribosomal subunit protein eS28 (75 aa).

The protein belongs to the eukaryotic ribosomal protein eS28 family.

The polypeptide is Small ribosomal subunit protein eS28 (Methanococcus aeolicus (strain ATCC BAA-1280 / DSM 17508 / OCM 812 / Nankai-3)).